Consider the following 106-residue polypeptide: Large ribosomal subunit protein uL24 (106 aa).

The protein belongs to the universal ribosomal protein uL24 family. As to quaternary structure, part of the 50S ribosomal subunit.

In terms of biological role, one of two assembly initiator proteins, it binds directly to the 5'-end of the 23S rRNA, where it nucleates assembly of the 50S subunit. Its function is as follows. One of the proteins that surrounds the polypeptide exit tunnel on the outside of the subunit. The chain is Large ribosomal subunit protein uL24 from Paracidovorax citrulli (strain AAC00-1) (Acidovorax citrulli).